The sequence spans 541 residues: Membrane protein insertase YidC (541 aa).

Residues 7 to 27 (ILLLALALVSFLLFQQWQVET) traverse the membrane as a helical segment. A compositionally biased stretch (polar residues) spans 34 to 55 (TVSTVQQTHKNGDVPTSSTANS). The tract at residues 34 to 59 (TVSTVQQTHKNGDVPTSSTANSDAPV) is disordered. 4 helical membrane passes run 343–363 (SFIQ…TFIV), 418–438 (LGGC…YWAL), 456–476 (LSAQ…MFLI), and 495–515 (FIPV…VLYW).

The protein belongs to the OXA1/ALB3/YidC family. Type 1 subfamily. As to quaternary structure, interacts with the Sec translocase complex via SecD. Specifically interacts with transmembrane segments of nascent integral membrane proteins during membrane integration.

The protein resides in the cell inner membrane. In terms of biological role, required for the insertion and/or proper folding and/or complex formation of integral membrane proteins into the membrane. Involved in integration of membrane proteins that insert both dependently and independently of the Sec translocase complex, as well as at least some lipoproteins. Aids folding of multispanning membrane proteins. The polypeptide is Membrane protein insertase YidC (Aliivibrio salmonicida (strain LFI1238) (Vibrio salmonicida (strain LFI1238))).